Consider the following 725-residue polypeptide: Lipoamidase (725 aa).

The segment at Met-1–Ser-52 is disordered. Low complexity predominate over residues Glu-9–Val-27. Residues Ala-28–Met-40 show a composition bias toward polar residues. Catalysis depends on charge relay system residues Lys-159 and Ser-235. Ser-259 functions as the Acyl-ester intermediate in the catalytic mechanism. The interval Lys-551–Gln-686 is disordered. Basic and acidic residues predominate over residues His-556–Asp-637. The segment covering Ser-650–Ser-661 has biased composition (low complexity). Positions Ala-662–Ser-679 are enriched in polar residues. A helical transmembrane segment spans residues Pro-700–Ile-720.

This sequence belongs to the amidase family. In terms of assembly, homodimer in solution.

The protein localises to the cell membrane. It carries out the reaction N(6)-[(R)-lipoyl]-L-lysyl-[lipoyl-carrier protein] + H2O = L-lysyl-[lipoyl-carrier protein] + (R)-lipoate. Its activity is regulated as follows. Lipoamidase activity is slightly inhibited by p-chloromercuribenzoate. In terms of biological role, amidohydrolase that releases lipoic acid from the protein-bound form. Cleaves the amide bond that links lipoic acid to the lipoylated lysine epsilon-amino groups, leading to the formation of free lipoic acid plus the unmodified protein. Shows activity toward both high molecular weight protein substrates such as a lipoyl domain and intact 2-oxoacid dehydrogenases as well as small molecule substrates such as lipoyl-lysine. Also acts on small biotinylated substrates. Hydrolyzes the synthetic substrates methyl lipoate and lipoamide. The physiologically important substrates are probably lipoyl-lysine and small peptides containing lipoyl-lysine. Lpa seems likely to enable this bacterium to utilize amide-linked forms of lipoic acid that otherwise could not be assimilated. The sequence is that of Lipoamidase from Enterococcus faecalis (Streptococcus faecalis).